The primary structure comprises 363 residues: 3-isopropylmalate dehydrogenase (363 aa).

Residue 78–91 (GPKWENLPPESQPE) coordinates NAD(+). 4 residues coordinate substrate: Arg99, Arg109, Arg138, and Asp227. The Mg(2+) site is built by Asp227, Asp251, and Asp255. 285–297 (GSAPDIAGKNIAN) is a binding site for NAD(+).

It belongs to the isocitrate and isopropylmalate dehydrogenases family. LeuB type 1 subfamily. Homodimer. Mg(2+) serves as cofactor. It depends on Mn(2+) as a cofactor.

The protein resides in the cytoplasm. The catalysed reaction is (2R,3S)-3-isopropylmalate + NAD(+) = 4-methyl-2-oxopentanoate + CO2 + NADH. The protein operates within amino-acid biosynthesis; L-leucine biosynthesis; L-leucine from 3-methyl-2-oxobutanoate: step 3/4. In terms of biological role, catalyzes the oxidation of 3-carboxy-2-hydroxy-4-methylpentanoate (3-isopropylmalate) to 3-carboxy-4-methyl-2-oxopentanoate. The product decarboxylates to 4-methyl-2 oxopentanoate. This Salmonella choleraesuis (strain SC-B67) protein is 3-isopropylmalate dehydrogenase.